The sequence spans 224 residues: Pyridoxal 5'-phosphate synthase subunit SNO1 (224 aa).

Residue 67 to 69 participates in L-glutamine binding; it reads GES. The Nucleophile role is filled by Cys100. L-glutamine contacts are provided by residues Arg129 and 160–161; that span reads IR. Residues His203 and Glu205 each act as charge relay system in the active site.

It belongs to the glutaminase PdxT/SNO family.

The catalysed reaction is aldehydo-D-ribose 5-phosphate + D-glyceraldehyde 3-phosphate + L-glutamine = pyridoxal 5'-phosphate + L-glutamate + phosphate + 3 H2O + H(+). It catalyses the reaction L-glutamine + H2O = L-glutamate + NH4(+). It participates in cofactor biosynthesis; pyridoxal 5'-phosphate biosynthesis. Catalyzes the hydrolysis of glutamine to glutamate and ammonia as part of the biosynthesis of pyridoxal 5'-phosphate. The resulting ammonia molecule is channeled to the active site of a SNZ isoform. The polypeptide is Pyridoxal 5'-phosphate synthase subunit SNO1 (SNO1) (Saccharomyces cerevisiae (strain ATCC 204508 / S288c) (Baker's yeast)).